The primary structure comprises 254 residues: Aquaporin TIP1-2 (254 aa).

The next 2 helical transmembrane spans lie at 24 to 44 (VAEFISTLIFVFAGSGSGMAF) and 56 to 76 (AGLIAASLAHALALFVAVSVG). Residues 85–87 (NPA) carry the NPA 1 motif. 3 helical membrane-spanning segments follow: residues 103 to 123 (ALVYWVAQLLGSVVACLLLKI), 144 to 164 (AVVLEMVMTFGLVYTVYATAV), and 173 to 193 (VIAPIAIGFIVGANILAGGAF). An NPA 2 motif is present at residues 199–201 (NPA). The helical transmembrane segment at 220 to 240 (WVGPLAGAAIAALVYDIIFIG) threads the bilayer.

Belongs to the MIP/aquaporin (TC 1.A.8) family. TIP (TC 1.A.8.10) subfamily.

The protein resides in the vacuole membrane. Its function is as follows. Aquaporins facilitate the transport of water and small neutral solutes across cell membranes. The protein is Aquaporin TIP1-2 (TIP1-2) of Zea mays (Maize).